An 83-amino-acid chain; its full sequence is MRRALTLAVLATCAVLPALAQVADLRSKTEFRVCADPAAVPMSSQDGKGFENRIAQLFAEKLGVPVAYTWFPQSRLHPQEPAR.

Residues 1–20 form the signal peptide; sequence MRRALTLAVLATCAVLPALA.

It to P.denitrificans and M.extorquens MoxJ.

This is an uncharacterized protein from Paracoccus denitrificans.